The following is a 459-amino-acid chain: tRNA modification GTPase MnmE (459 aa).

R25, E87, and R126 together coordinate (6S)-5-formyl-5,6,7,8-tetrahydrofolate. The region spanning 221-380 (GLKVAIVGRP…LETAILEIVQ (160 aa)) is the TrmE-type G domain. Residue N231 coordinates K(+). Residues 231-236 (NVGKSS), 250-256 (TDLPGTT), and 275-278 (DTAG) each bind GTP. Position 235 (S235) interacts with Mg(2+). The K(+) site is built by T250, L252, and T255. T256 is a binding site for Mg(2+). Position 459 (K459) interacts with (6S)-5-formyl-5,6,7,8-tetrahydrofolate.

This sequence belongs to the TRAFAC class TrmE-Era-EngA-EngB-Septin-like GTPase superfamily. TrmE GTPase family. In terms of assembly, homodimer. Heterotetramer of two MnmE and two MnmG subunits. K(+) is required as a cofactor.

The protein resides in the cytoplasm. Its function is as follows. Exhibits a very high intrinsic GTPase hydrolysis rate. Involved in the addition of a carboxymethylaminomethyl (cmnm) group at the wobble position (U34) of certain tRNAs, forming tRNA-cmnm(5)s(2)U34. The chain is tRNA modification GTPase MnmE from Nostoc sp. (strain PCC 7120 / SAG 25.82 / UTEX 2576).